The sequence spans 215 residues: Large ribosomal subunit protein bL25 (215 aa).

Residues 192-203 (EEATEEEEEAAE) show a composition bias toward acidic residues. Residues 192–215 (EEATEEEEEAAEPEVIKRKEEEEE) form a disordered region. The span at 205–215 (EVIKRKEEEEE) shows a compositional bias: basic and acidic residues.

It belongs to the bacterial ribosomal protein bL25 family. CTC subfamily. As to quaternary structure, part of the 50S ribosomal subunit; part of the 5S rRNA/L5/L18/L25 subcomplex. Contacts the 5S rRNA. Binds to the 5S rRNA independently of L5 and L18.

Functionally, this is one of the proteins that binds to the 5S RNA in the ribosome where it forms part of the central protuberance. The polypeptide is Large ribosomal subunit protein bL25 (Thermotoga sp. (strain RQ2)).